Reading from the N-terminus, the 370-residue chain is Probable endopolygalacturonase A (370 aa).

The signal sequence occupies residues 1 to 19 (MPSAKPLFCLATLAGAALA). Positions 20-32 (APAPSRATDFNKR) are excised as a propeptide. An intrachain disulfide couples Cys-35 to Cys-50. 6 PbH1 repeats span residues 162 to 192 (SDNL…DISE), 193 to 214 (STYI…AINS), 215 to 235 (GENI…SIGS), 244 to 265 (VKNV…RIKT), 273 to 295 (VEDI…VIEQ), and 307 to 352 (SNGV…DITG). Asp-207 acts as the Proton donor in catalysis. Cys-209 and Cys-225 form a disulfide bridge. The active site involves His-229. Residue Asn-246 is glycosylated (N-linked (GlcNAc...) asparagine). 2 cysteine pairs are disulfide-bonded: Cys-335–Cys-340 and Cys-359–Cys-368.

It belongs to the glycosyl hydrolase 28 family.

It localises to the secreted. It catalyses the reaction (1,4-alpha-D-galacturonosyl)n+m + H2O = (1,4-alpha-D-galacturonosyl)n + (1,4-alpha-D-galacturonosyl)m.. Involved in maceration and soft-rotting of plant tissue. Hydrolyzes the 1,4-alpha glycosidic bonds of de-esterified pectate in the smooth region of the plant cell wall. The protein is Probable endopolygalacturonase A (pgaA) of Aspergillus kawachii (strain NBRC 4308) (White koji mold).